The chain runs to 347 residues: Putative adhesin P1-like protein MPN_099 (347 aa).

Over residues 282-300 the composition is skewed to polar residues; the sequence is FGTDHSTQPQPQSLKTTTP. The tract at residues 282–302 is disordered; it reads FGTDHSTQPQPQSLKTTTPVF.

This sequence belongs to the adhesin P1 family.

The sequence is that of Putative adhesin P1-like protein MPN_099 from Mycoplasma pneumoniae (strain ATCC 29342 / M129 / Subtype 1) (Mycoplasmoides pneumoniae).